The sequence spans 821 residues: Centrosomal protein of 95 kDa (821 aa).

Disordered stretches follow at residues 310 to 354 (TLCK…FPQK), 390 to 474 (ATGE…DTHH), and 514 to 550 (KEAFAKGTTKQSQVQKIYSRKTAAPTPKGGLLKSSKA). Composition is skewed to basic and acidic residues over residues 325–340 (ESSKTRRLSKGERSEN) and 390–410 (ATGEAHGKDGGAGDEEAHSAN). Basic residues predominate over residues 427–441 (RKPRPGFSMHRKAPY). A phosphoserine mark is found at Ser445, Ser447, and Ser449. Coiled coils occupy residues 578–627 (LTKM…VKKE) and 695–789 (LQIQ…DDDA).

It is found in the cytoplasm. The protein resides in the cytoskeleton. Its subcellular location is the microtubule organizing center. The protein localises to the centrosome. It localises to the spindle pole. This Rattus norvegicus (Rat) protein is Centrosomal protein of 95 kDa (Cep95).